The primary structure comprises 5289 residues: Mucin-2 (5289 aa).

Positions 1–20 are cleaved as a signal peptide; sequence MGLPLARLAAVCLALSLAGG. At Ser-21 the chain carries Phosphoserine. His-34 is a Cu(2+) binding site. Residues 35-207 enclose the VWFD 1 domain; that stretch reads NVCSTWGNFH…KINQPDVVCE (173 aa). 29 disulfides stabilise this stretch: Cys-37/Cys-169, Cys-59/Cys-206, Cys-67/Cys-166, Cys-218/Cys-255, Cys-225/Cys-250, Cys-237/Cys-275, Cys-257/Cys-263, Cys-265/Cys-291, Cys-295/Cys-329, Cys-308/Cys-321, Cys-312/Cys-351, Cys-331/Cys-345, Cys-353/Cys-375, Cys-370/Cys-387, Cys-373/Cys-382, Cys-391/Cys-528, Cys-413/Cys-563, Cys-435/Cys-443, Cys-574/Cys-619, Cys-588/Cys-614, Cys-601/Cys-639, Cys-621/Cys-627, Cys-629/Cys-654, Cys-661/Cys-698, Cys-674/Cys-688, Cys-678/Cys-718, Cys-700/Cys-712, Cys-720/Cys-742, and Cys-740/Cys-749. A Ca(2+)-binding site is contributed by Asp-49. Met-146 and Met-154 together coordinate Cu(+). Residue Glu-156 coordinates Cu(2+). The N-linked (GlcNAc...) asparagine glycan is linked to Asn-163. Residues Asp-171, Asn-173, Leu-175, and Glu-180 each coordinate Ca(2+). His-277 is a Cu(2+) binding site. In terms of domain architecture, TIL spans 295 to 351; sequence CPGNLVYLESGSPCMDTCSHLEVSSLCEEHRMDGCFCPEGTVYDDIGDSGCVPVSQC. Residue His-324 coordinates Cu(2+). A Cu(+)-binding site is contributed by Met-326. Residues 389–564 form the VWFD 2 domain; sequence GTCALEGGSH…NTWKAQSSCH (176 aa). Position 403 (Asp-403) interacts with Ca(2+). Residue Asn-423 is glycosylated (N-linked (GlcNAc...) asparagine). 5 residues coordinate Ca(2+): Asn-530, Asn-532, Leu-534, Asp-537, and Asp-538. Asn-670 is a glycosylation site (N-linked (GlcNAc...) asparagine). Asn-770 is a glycosylation site (N-linked (GlcNAc...) asparagine). Disulfide bonds link Cys-784–Cys-820, Cys-802–Cys-814, Cys-822–Cys-844, Cys-839–Cys-856, Cys-842–Cys-851, Cys-860–Cys-992, Cys-882–Cys-1027, Cys-891–Cys-989, Cys-909–Cys-916, Cys-1037–Cys-1080, Cys-1051–Cys-1075, Cys-1062–Cys-1102, Cys-1082–Cys-1090, Cys-1092–Cys-1117, Cys-1108–Cys-1137, Cys-1121–Cys-1163, Cys-1145–Cys-1187, Cys-1167–Cys-1181, Cys-1189–Cys-1213, Cys-1208–Cys-1238, and Cys-1211–Cys-1221. One can recognise a VWFD 3 domain in the interval 858-1028; it reads GTCSIYGSGH…NSWKEAPTCP (171 aa). Asp-872 contributes to the Ca(2+) binding site. Asn-894 carries N-linked (GlcNAc...) asparagine glycosylation. The Ca(2+) site is built by Asn-994, Asp-996, Arg-998, Asn-1001, and Asp-1002. 2 N-linked (GlcNAc...) asparagine glycosylation sites follow: Asn-1139 and Asn-1154. N-linked (GlcNAc...) asparagine glycans are attached at residues Asn-1215, Asn-1230, and Asn-1246. Residues Thr-1266, Thr-1267, Thr-1269, Thr-1270, Thr-1272, Thr-1275, Thr-1276, Thr-1281, Thr-1282, and Thr-1287 are each glycosylated (O-linked (GalNAc) threonine). Ser-1291 and Ser-1292 each carry an O-linked (GalNAc) serine glycan. An O-linked (GalNAc) threonine glycan is attached at Thr-1293. Ser-1296 carries O-linked (GalNAc) serine glycosylation. Thr-1297 carries an O-linked (GalNAc) threonine glycan. The Ca(2+) site is built by Asn-1310, Asp-1312, His-1313, Ser-1316, Asp-1319, Gly-1321, Asp-1322, Glu-1324, Asp-1381, and Tyr-1382. 5 stretches are compositionally biased toward pro residues: residues 1399-1411, 1419-1510, 1520-1549, 1559-1628, and 1638-1679; these read PSPPTTTPSPPPT, TTTP…PITP, TTTPSPPTTTTTTPPPTTTPSPPTTTPITP, and TTTP…PPTT. A disordered region spans residues 1399–1773; the sequence is PSPPTTTPSP…SITPPTFSPF (375 aa). 6 consecutive repeat copies span residues 1401 to 1416, 1417 to 1432, 1433 to 1448, 1449 to 1464, 1465 to 1471, and 1472 to 1478. The tract at residues 1401 to 1747 is approximate repeats; that stretch reads PPTTTPSPPP…SPPTTTMTTL (347 aa). Residues 1479 to 1494 form a 7A repeat; sequence PPTTTPSPPTTTTTTP. A 7B repeat occupies 1495 to 1517; it reads PPTTTPSPPTTTPITPPASTTTL. Residues 1518 to 1533 form an 8A repeat; sequence PPTTTPSPPTTTTTTP. One copy of the 8B repeat lies at 1534 to 1556; sequence PPTTTPSPPTTTPITPPTSTTTL. The stretch at 1557-1572 is one 9A repeat; the sequence is PPTTTPSPPPTTTTTP. Residues 1573–1596 form a 9B repeat; it reads PPTTTPSPPTTTTPSPPTITTTTP. Residues 1597 to 1612 form a 10A repeat; it reads PPTTTPSPPTTTTTTP. One copy of the 10B repeat lies at 1613 to 1635; sequence PPTTTPSPPTTTPITPPTSTTTL. The stretch at 1636 to 1651 is one 11A repeat; it reads PPTTTPSPPPTTTTTP. One copy of the 11B repeat lies at 1652–1675; sequence PPTTTPSPPTTTTPSPPITTTTTP. 5 repeat units span residues 1676–1683, 1684–1699, 1700–1715, 1716–1731, and 1732–1747. Composition is skewed to low complexity over residues 1680–1720 and 1741–1759; these read TPSS…STTT and TTTMTTLPPTTTSSPLTTT. Pro residues predominate over residues 1760–1770; that stretch reads PLPPSITPPTF. Asn-1787 and Asn-1820 each carry an N-linked (GlcNAc...) asparagine glycan. 4 stretches are compositionally biased toward low complexity: residues 1885 to 2158, 2165 to 4238, 4269 to 4315, and 4329 to 4430; these read MTTT…TMVT, GTQT…QTPT, TTVT…STAP, and STPQ…PSII. Disordered stretches follow at residues 1885-4238 and 4269-4430; these read MTTT…QTPT and TTVT…PSII. N-linked (GlcNAc...) asparagine glycans are attached at residues Asn-4449, Asn-4461, Asn-4472, and Asn-4483. The tract at residues 4492–4524 is disordered; the sequence is PTPTPSKSTPTPSKPSSTPSKPTPGTKPPECPD. The span at 4496–4511 shows a compositional bias: low complexity; sequence PSKSTPTPSKPSSTPS. Positions 4512-4522 are enriched in pro residues; that stretch reads KPTPGTKPPEC. Asn-4532, Asn-4548, and Asn-4612 each carry an N-linked (GlcNAc...) asparagine glycan. The region spanning 4589–4772 is the VWFD 4 domain; the sequence is CYCTGWGDPH…VNDPSKPHCP (184 aa). Cystine bridges form between Cys-4591–Cys-4732, Cys-4613–Cys-4771, and Cys-4637–Cys-4645. Asn-4726 and Asn-4737 each carry an N-linked (GlcNAc...) asparagine glycan. Residues 4770-4795 are disordered; that stretch reads HCPHSSSTTKRPAVTVPGGGKTTPHK. N-linked (GlcNAc...) asparagine glycosylation is found at Asn-4862, Asn-4897, Asn-4991, Asn-4998, Asn-5065, Asn-5080, Asn-5129, Asn-5148, and Asn-5179. The VWFC 1 domain maps to 4927–4996; the sequence is CVGPDNVPRE…DTCCNITVCK (70 aa). Residues 5034–5101 enclose the VWFC 2 domain; that stretch reads GVCVHGNAEY…APGECCKKCE (68 aa). Cystine bridges form between Cys-5185–Cys-5232, Cys-5199–Cys-5246, Cys-5208–Cys-5262, and Cys-5212–Cys-5264. A CTCK domain is found at 5185 to 5270; the sequence is CSTVPVTTEV…SCQCQDTVCG (86 aa).

As to quaternary structure, homomultimer; disulfide-linked. The N- and C-terminus mediate their assembly into higher order structures to form filaments. The CTCK domains of two polypeptides associate in the endoplasmic reticulum to generate intermolecularly disulfide-bonded dimers. These dimers progress to the Golgi apparatus, which is a more acidic environment than the endoplasmic reticulum. Under acidic conditions, the N-termini form non-covalent intermolecular interactions that juxtapose assemblies of the third VWD domain (VWD3) from different CTCK-linked dimers. The VWD3 assemblies then become disulfide bonded to one another to produce long, disulfide-linked polymers that remain highly compact until secretion. Interacts with FCGBP. Interacts with AGR2; disulfide-linked. (Microbial infection) Interacts in vitro with L.monocytogenes internalin proteins InlB, InlC and InlJ; for InlC binding is slightly better at pH 5.5, (the pH of the intestine) than at pH 7.4. Post-translationally, O-glycosylated. O-glycosylation is required for mucin assembly. Goblet cells synthesize two forms of mucin that differ in branched chain O-glycosylation and the site of production in the colon. In terms of processing, may undergo proteolytic cleavage in the outer mucus layer of the colon, contributing to the expanded volume and loose nature of this layer which allows for bacterial colonization in contrast to the inner mucus layer which is dense and devoid of bacteria. At low pH of 6 and under, undergoes autocatalytic cleavage in vitro in the N-terminal region of the fourth VWD domain. It is likely that this also occurs in vivo and is triggered by the low pH of the late secretory pathway. As to expression, colon, small intestine, colonic tumors, bronchus, cervix and gall bladder.

It localises to the secreted. Its function is as follows. Coats the epithelia of the intestines and other mucus membrane-containing organs to provide a protective, lubricating barrier against particles and infectious agents at mucosal surfaces. Major constituent of the colon mucus, which is mainly formed by large polymeric networks of MUC2 secreted by goblet cells that cover the exposed surfaces of intestine. MUC2 networks form hydrogels that guard the underlying epithelium from pathogens and other hazardous matter entering from the outside world, while permitting nutrient absorption and gas exchange. Acts as a divalent copper chaperone that protects intestinal cells from copper toxicity and facilitates nutritional copper unptake into cells. Binds both Cu(2+) and its reduced form, Cu(1+), at two juxtaposed binding sites: Cu(2+), once reduced to Cu(1+) by vitamin C (ascorbate) or other dietary antioxidants, transits to the other binding site. MUC2-bound Cu(1+) is protected from oxidation in aerobic environments, and can be released for nutritional delivery to cells. Mucin gels store antimicrobial molecules that participate in innate immunity. Mucin glycoproteins also house and feed the microbiome, lubricate tissue surfaces, and may facilitate the removal of contaminants and waste products from the body. Goblet cells synthesize two forms of MUC2 mucin that differ in branched chain O-glycosylation and the site of production in the colon: a (1) 'thick' mucus that wraps the microbiota to form fecal pellets is produced in the proximal, ascending colon. 'Thick' mucus transits along the descending colon and is lubricated by a (2) 'thin' MUC2 mucus produced in the distal colon which adheres to the 'thick' mucus. The polypeptide is Mucin-2 (Homo sapiens (Human)).